Consider the following 180-residue polypeptide: Peroxisome assembly protein 22 (180 aa).

Residues 15 to 32 traverse the membrane as a helical segment; it reads LGIVGTAIAVLVTSYYIY.

This sequence belongs to the peroxin-22 family.

The protein localises to the peroxisome membrane. Its function is as follows. Involved in peroxisome biogenesis. This is Peroxisome assembly protein 22 (PEX22) from Saccharomyces cerevisiae (strain ATCC 204508 / S288c) (Baker's yeast).